A 204-amino-acid chain; its full sequence is Elongation factor Ts (204 aa).

Residues 87 to 90 (TDFV) are involved in Mg(2+) ion dislocation from EF-Tu.

This sequence belongs to the EF-Ts family.

The protein resides in the cytoplasm. In terms of biological role, associates with the EF-Tu.GDP complex and induces the exchange of GDP to GTP. It remains bound to the aminoacyl-tRNA.EF-Tu.GTP complex up to the GTP hydrolysis stage on the ribosome. The polypeptide is Elongation factor Ts (Frankia casuarinae (strain DSM 45818 / CECT 9043 / HFP020203 / CcI3)).